The chain runs to 139 residues: MAIERTLSIIKPDAVAKNVIGQIYSRFEKAGLKIISAKMCHLSKPQAEKFYAVHKDRPFYPDLVKFMTQGPVMIQVLEGENAIVKNREIMGATNPKEALPGTIRADFADSIDANAVHGSDGPETAKEEIAFFFKPDEIF.

ATP is bound by residues Lys-11, Phe-59, Arg-87, Thr-93, Arg-104, and Asn-114. The Pros-phosphohistidine intermediate role is filled by His-117.

The protein belongs to the NDK family. In terms of assembly, homotetramer. It depends on Mg(2+) as a cofactor.

It localises to the cytoplasm. The catalysed reaction is a 2'-deoxyribonucleoside 5'-diphosphate + ATP = a 2'-deoxyribonucleoside 5'-triphosphate + ADP. It carries out the reaction a ribonucleoside 5'-diphosphate + ATP = a ribonucleoside 5'-triphosphate + ADP. Its function is as follows. Major role in the synthesis of nucleoside triphosphates other than ATP. The ATP gamma phosphate is transferred to the NDP beta phosphate via a ping-pong mechanism, using a phosphorylated active-site intermediate. This Coxiella burnetii (strain CbuK_Q154) (Coxiella burnetii (strain Q154)) protein is Nucleoside diphosphate kinase.